Consider the following 410-residue polypeptide: MNYLISSLPFPNNFLNSSHSPFVFGLICGSLLGTSMNVGSFISLRRLIIQGIPAGVVSYLGSAISETFFLFLILFGYIGVIEKWFTLEPSLTFIITVFCADTIIGFLLDNRLKIVSLSQTTDLLKIFLCNAVIVFGNPGSTWGATSLITSIEGFQFRENSLFLFGVFLGIFVIGCGIGFLILALTNLWMIQSSKTFRSLIYRSNKIISHLALCILILSTIYYHWQVYIGLSLSTSSMPMITITKHDREPFYTDDESQMSWNRYKNKVERKNQPHPMKTLGGLPIKQFGQWFKKNVITSNPEDLDARGLPRERTKTGDYVPNYETMQAIRNKKWFSRSKNYLYIKEKIFSLLSINPMKVKFLEHSRRDMDLFYLGDKKSTRITITEMSKSDYNQMLENRKQRIQNIINRRN.

The next 6 membrane-spanning stretches (helical) occupy residues 22–42, 61–81, 87–107, 131–151, 161–181, and 210–230; these read FVFG…GSFI, GSAI…IGVI, LEPS…IGFL, AVIV…ITSI, LFLF…GFLI, and LALC…YIGL.

This sequence belongs to the TIC214 family. Part of the Tic complex.

It is found in the plastid. The protein resides in the chloroplast inner membrane. In terms of biological role, involved in protein precursor import into chloroplasts. May be part of an intermediate translocation complex acting as a protein-conducting channel at the inner envelope. The polypeptide is Protein TIC 214 (Mesostigma viride (Green alga)).